Here is a 222-residue protein sequence, read N- to C-terminus: MSLIGKLFGTGGKGAKGPSPQEAIQKLRDTEEMLTKKQEFLEKKIEQELVTAKKHGTKNKRAALQALKRKKRYEKQLAQIDGTLSTIEFQREALENANTNTEVLKNMGFAAKAMKAAHDNMDIEKVDELMQDIADQQELAQEISDAISKPVGFGEDFDEDELMAELEELEQEELDKNLLEVQGPETVPLPNVPAAVLPAKPVKKKQEEDDDDMRELENWATA.

2 disordered regions span residues 1-21 (MSLI…PSPQ) and 183-222 (GPET…WATA). Residues 21–182 (QEAIQKLRDT…ELDKNLLEVQ (162 aa)) adopt a coiled-coil conformation. A compositionally biased stretch (low complexity) spans 188-200 (PLPNVPAAVLPAK).

Belongs to the SNF7 family. As to quaternary structure, probable core component of the endosomal sorting required for transport complex III (ESCRT-III). ESCRT-III components are thought to multimerize to form a flat lattice on the perimeter membrane of the endosome.

Its subcellular location is the cytoplasm. The protein resides in the cytosol. It is found in the late endosome membrane. The protein localises to the midbody. Probable core component of the endosomal sorting required for transport complex III (ESCRT-III) which is involved in multivesicular bodies (MVBs) formation and sorting of endosomal cargo proteins into MVBs. MVBs contain intraluminal vesicles (ILVs) that are generated by invagination and scission from the limiting membrane of the endosome and mostly are delivered to lysosomes enabling degradation of membrane proteins, such as stimulated growth factor receptors, lysosomal enzymes and lipids. This is Charged multivesicular body protein 4b (chmp4b) from Xenopus tropicalis (Western clawed frog).